The primary structure comprises 393 residues: MGEALDKEYVLHSYGRNYVQFTQGKNATLWDSEGKDYIDFASGIAVCSVGHGNERLAGAICDQAKKLIHTSNLYYIEPQARLAEKLVKLSGYDMRVFFANSGAEANEGAIKIARKFGESHEGEVKRYKIITLESSFHGRTITALKATGQEKMHHYFGPYPDGFVYAKNLDHVFKLVDEKTCAVLLELVQGEGGIEPQDREGIKKLERFLKERGVLLMVDEVQTGIYRSGELFASQAYGIVPDVITVAKGLAGGVPIGAVMTTLKDIFAPGDHGSTFGGNFLSTRAGLEVLSILESLYQEGTLQKSIDRFSAELRALCVEFPSLFECEVGLGLMRGIRAKSAEIQKSVIDEAFKKRVLVLRSGRNTVRFLPPLTLSEREMQEGFSRLREALKGI.

Pyridoxal 5'-phosphate-binding positions include Gly-102 to Ala-103 and Phe-136. Arg-139 contributes to the N(2)-acetyl-L-ornithine binding site. Asp-219–Gln-222 serves as a coordination point for pyridoxal 5'-phosphate. Lys-248 carries the post-translational modification N6-(pyridoxal phosphate)lysine. Ser-274 is a binding site for N(2)-acetyl-L-ornithine. Thr-275 provides a ligand contact to pyridoxal 5'-phosphate.

Belongs to the class-III pyridoxal-phosphate-dependent aminotransferase family. ArgD subfamily. As to quaternary structure, homodimer. Pyridoxal 5'-phosphate serves as cofactor.

It localises to the cytoplasm. It carries out the reaction N(2)-acetyl-L-ornithine + 2-oxoglutarate = N-acetyl-L-glutamate 5-semialdehyde + L-glutamate. It participates in amino-acid biosynthesis; L-arginine biosynthesis; N(2)-acetyl-L-ornithine from L-glutamate: step 4/4. The sequence is that of Acetylornithine aminotransferase from Wolinella succinogenes (strain ATCC 29543 / DSM 1740 / CCUG 13145 / JCM 31913 / LMG 7466 / NCTC 11488 / FDC 602W) (Vibrio succinogenes).